We begin with the raw amino-acid sequence, 885 residues long: Alpha-actinin (885 aa).

Positions 1–242 are actin-binding; that stretch reads MTQDGYMQQE…IMTYVSWYYH (242 aa). 2 consecutive Calponin-homology (CH) domains span residues 26 to 130 and 139 to 245; these read KQQR…LRFA and MTAK…HAFH. Spectrin repeat units follow at residues 270 to 377, 389 to 494, 508 to 614, and 626 to 727; these read LMEE…EEWL, HLAQ…ALDE, EFAK…HTLQ, and LRRQ…NEVE. EF-hand domains are found at residues 741 to 776 and 780 to 815; these read EQLN…LGYN and DDRP…EYTD. Residues aspartate 754, threonine 758, arginine 760, glutamate 765, aspartate 793, asparagine 795, threonine 797, and tyrosine 799 each coordinate Ca(2+).

The protein belongs to the alpha-actinin family. As to quaternary structure, homodimer; antiparallel.

F-actin cross-linking protein which is thought to anchor actin to a variety of intracellular structures. This is a bundling protein. The chain is Alpha-actinin from Dermatophagoides farinae (American house dust mite).